The following is a 214-amino-acid chain: UPF0725 protein At1g19565 (214 aa).

A disordered region spans residues 56–92 (EEEYEPSLPSSESPTDSCHADHESPDSPKYQQPAPGE).

It belongs to the UPF0725 (EMB2204) family.

In Arabidopsis thaliana (Mouse-ear cress), this protein is UPF0725 protein At1g19565.